The sequence spans 707 residues: Protein O-mannosyl-transferase TMEM260 (707 aa).

The next 8 membrane-spanning stretches (helical) occupy residues 28-48 (GGVAVFAAVAAVFTFTLPPSV), 71-91 (YPLFTLVAKLAITLFPFGSIA), 94-114 (VNLLCGLFGAVAASLLFFTVF), 141-161 (IAAEVFSLNNLFVGLLMALTV), 189-209 (NQHTIILYVLCIIPWILFQLL), 222-242 (LSLYFSAGLLPYVHLPISSYL), 318-338 (NPSLVWLFTGMFCIYSLFFAW), and 356-376 (FWMQSNAVVAVLAGIGLAAVV). The Lumenal segment spans residues 377-707 (SETNRVLNSN…LQSLRNRKNV (331 aa)). N-linked (GlcNAc...) asparagine glycans are attached at residues asparagine 407, asparagine 535, and asparagine 568.

The protein belongs to the glycosyltransferase 117 (GT117) family. As to expression, expressed in brain, heart, kidney, liver, lung, pancreas and placenta but are not detected in skeletal muscle.

Its subcellular location is the endoplasmic reticulum membrane. It localises to the membrane. The catalysed reaction is a di-trans,poly-cis-dolichyl beta-D-mannosyl phosphate + L-seryl-[protein] = 3-O-(alpha-D-mannosyl)-L-seryl-[protein] + a di-trans,poly-cis-dolichyl phosphate + H(+). It carries out the reaction a di-trans,poly-cis-dolichyl beta-D-mannosyl phosphate + L-threonyl-[protein] = 3-O-(alpha-D-mannosyl)-L-threonyl-[protein] + a di-trans,poly-cis-dolichyl phosphate + H(+). Its function is as follows. O-mannosyl-transferase that transfers mannosyl residues to the hydroxyl group of serine or threonine residues of proteins. Specifically glycosylates the IPT/TIG domain of target proteins, such as MET and MST1R/RON. TMEM260-mediated O-mannosylated residues are composed of single mannose glycans that are not elongated or modified. The sequence is that of Protein O-mannosyl-transferase TMEM260 from Homo sapiens (Human).